The following is a 190-amino-acid chain: Elongation factor P-like protein (190 aa).

It belongs to the elongation factor P family.

The chain is Elongation factor P-like protein from Erwinia tasmaniensis (strain DSM 17950 / CFBP 7177 / CIP 109463 / NCPPB 4357 / Et1/99).